The sequence spans 356 residues: GTPase Obg (356 aa).

In terms of domain architecture, Obg spans 1-159 (MKFLDEAKVY…RWIWLRMKLI (159 aa)). One can recognise an OBG-type G domain in the interval 160–327 (ADAGLVGLPN…ALRKLADVVG (168 aa)). Residues 166–173 (GLPNAGKS), 191–195 (FTTLH), 212–215 (DIPG), 279–282 (NKID), and 308–310 (SGA) contribute to the GTP site. Residues Ser173 and Thr193 each coordinate Mg(2+). The tract at residues 327–356 (GEQPVSSKAKNAVESAATEEPWAAPVPPQG) is disordered.

Belongs to the TRAFAC class OBG-HflX-like GTPase superfamily. OBG GTPase family. As to quaternary structure, monomer. The cofactor is Mg(2+).

Its subcellular location is the cytoplasm. Its function is as follows. An essential GTPase which binds GTP, GDP and possibly (p)ppGpp with moderate affinity, with high nucleotide exchange rates and a fairly low GTP hydrolysis rate. Plays a role in control of the cell cycle, stress response, ribosome biogenesis and in those bacteria that undergo differentiation, in morphogenesis control. This chain is GTPase Obg, found in Bradyrhizobium sp. (strain ORS 278).